The primary structure comprises 153 residues: Ribosomal RNA large subunit methyltransferase H (153 aa).

S-adenosyl-L-methionine contacts are provided by residues Leu70, Gly102, and Leu121–Phe126.

Belongs to the RNA methyltransferase RlmH family. As to quaternary structure, homodimer.

It is found in the cytoplasm. The enzyme catalyses pseudouridine(1915) in 23S rRNA + S-adenosyl-L-methionine = N(3)-methylpseudouridine(1915) in 23S rRNA + S-adenosyl-L-homocysteine + H(+). In terms of biological role, specifically methylates the pseudouridine at position 1915 (m3Psi1915) in 23S rRNA. In Geobacter sulfurreducens (strain ATCC 51573 / DSM 12127 / PCA), this protein is Ribosomal RNA large subunit methyltransferase H.